Consider the following 415-residue polypeptide: Maltose excess protein 1, chloroplastic (415 aa).

A disordered region spans residues 74–93; the sequence is SESDSDSDFPHENQQGNPGL. Transmembrane regions (helical) follow at residues 139–159, 176–196, 199–219, 231–251, 252–272, 286–306, 322–342, 345–365, and 373–393; these read ALSA…LSLL, LGVV…AMPI, FVAT…YYFG, DVIT…TFVP, LVPN…AAII, FVGS…PVSQ, SITM…ALFI, LMWL…NILC, and SQSF…LALW.

As to expression, expressed in leaves and roots. Expressed in root cap cells.

It is found in the plastid. Its subcellular location is the chloroplast inner membrane. Probable maltose transporter. Essential for the conversion of starch to sucrose in leaves at night, probably via the export of maltose from the chloroplast. Required for root cap cells formation. This Arabidopsis thaliana (Mouse-ear cress) protein is Maltose excess protein 1, chloroplastic (MEX1).